A 269-amino-acid chain; its full sequence is Imidazole glycerol phosphate synthase subunit HisF (269 aa).

Residues D23 and D142 contribute to the active site.

Belongs to the HisA/HisF family. As to quaternary structure, heterodimer of HisH and HisF.

The protein resides in the cytoplasm. It catalyses the reaction 5-[(5-phospho-1-deoxy-D-ribulos-1-ylimino)methylamino]-1-(5-phospho-beta-D-ribosyl)imidazole-4-carboxamide + L-glutamine = D-erythro-1-(imidazol-4-yl)glycerol 3-phosphate + 5-amino-1-(5-phospho-beta-D-ribosyl)imidazole-4-carboxamide + L-glutamate + H(+). Its pathway is amino-acid biosynthesis; L-histidine biosynthesis; L-histidine from 5-phospho-alpha-D-ribose 1-diphosphate: step 5/9. In terms of biological role, IGPS catalyzes the conversion of PRFAR and glutamine to IGP, AICAR and glutamate. The HisF subunit catalyzes the cyclization activity that produces IGP and AICAR from PRFAR using the ammonia provided by the HisH subunit. The chain is Imidazole glycerol phosphate synthase subunit HisF from Bordetella parapertussis (strain 12822 / ATCC BAA-587 / NCTC 13253).